A 351-amino-acid polypeptide reads, in one-letter code: Cyclic AMP-dependent transcription factor ATF-4 (351 aa).

K53 is covalently cross-linked (Glycyl lysine isopeptide (Lys-Gly) (interchain with G-Cter in SUMO2)). The disordered stretch occupies residues 210-268 (EEDTPSDNDSGICMSPESYLGSPQHSPSTRGSPNRSLPSPGVLCGSARPKPYDPPGEKM). T213 is modified (phosphothreonine). A Phosphoserine; by CK2 modification is found at S215. A BetaTrCP degron motif motif is present at residues 215 to 224 (SDNDSGICMS). A phosphoserine mark is found at S219, S224, S231, and S235. Residues 230-246 (GSPQHSPSTRGSPNRSL) are compositionally biased toward polar residues. Residue P236 is modified to 4-hydroxyproline. S245 carries the post-translational modification Phosphoserine; by RPS6KA3. S248 is subject to Phosphoserine. Glycyl lysine isopeptide (Lys-Gly) (interchain with G-Cter in SUMO2) cross-links involve residues K259, K267, and K272. The bZIP domain maps to 278–341 (LDKKLKKMEQ…QYLKDLIEEV (64 aa)). The basic motif stretch occupies residues 280-300 (KKLKKMEQNKTAATRYRQKKR). The stretch at 280–340 (KKLKKMEQNK…IQYLKDLIEE (61 aa)) forms a coiled coil. The interaction with GABBR1 stretch occupies residues 305-341 (ALTGECKELEKKNEALKERADSLAKEIQYLKDLIEEV). A leucine-zipper region spans residues 306-334 (LTGECKELEKKNEALKERADSLAKEIQYL). The residue at position 311 (K311) is an N6-acetyllysine.

This sequence belongs to the bZIP family. Binds DNA as a homodimer and as a heterodimer. Heterodimer; heterodimerizes with CEBPB. Heterodimer; heterodimerizes with DDIT3/CHOP. Interacts with CEP290 (via an N-terminal region). Interacts with NEK6, DAPK2 (isoform 2) and ZIPK/DAPK3. Interacts (via its leucine zipper domain) with GABBR1 and GABBR2 (via their C-termini). Forms a heterodimer with TXLNG in osteoblasts. Interacts (via its DNA binding domain) with FOXO1 (C-terminal half); the interaction occurs in osteoblasts and regulates glucose homeostasis through suppression of beta-cell proliferation and a decrease in insulin production. Interacts with SATB2; the interaction results in enhanced DNA binding and transactivation by these transcription factors. Interacts with ABRAXAS2. Interacts with TRIB3, inhibiting the transactivation activity of ATF4. Interacts with DISC1; which inhibits ATF4 transcription factor activity by disrupting ATF4 dimerization and DNA-binding. Interacts with EP300/p300; EP300/p300 stabilizes ATF4 and increases its transcriptional activity independently of its catalytic activity by preventing its ubiquitination. In terms of processing, ubiquitinated by SCF(BTRC) in response to mTORC1 signal, followed by proteasomal degradation and leading to down-regulate expression of SIRT4. Interaction with EP300/p300 inhibits ubiquitination by SCF(BTRC). Phosphorylation at Ser-245 by RPS6KA3/RSK2 in osteoblasts enhances transactivation activity and promotes osteoblast differentiation. Phosphorylated on the betaTrCP degron motif at Ser-219, followed by phosphorylation at Thr-213, Ser-224, Ser-231, Ser-235 and Ser-248, promoting interaction with BTRC and ubiquitination. Phosphorylation is promoted by mTORC1. Phosphorylation at Ser-215 by CK2 decreases its stability. Phosphorylated by NEK6. Post-translationally, hydroxylated by PHD3, leading to decreased protein stability.

The protein localises to the nucleus. The protein resides in the nucleus speckle. Its subcellular location is the cytoplasm. It localises to the cell membrane. It is found in the cytoskeleton. The protein localises to the microtubule organizing center. The protein resides in the centrosome. Transcription factor that binds the cAMP response element (CRE) (consensus: 5'-GTGACGT[AC][AG]-3') and displays two biological functions, as regulator of metabolic and redox processes under normal cellular conditions, and as master transcription factor during integrated stress response (ISR). Binds to asymmetric CRE's as a heterodimer and to palindromic CRE's as a homodimer. Core effector of the ISR, which is required for adaptation to various stress such as endoplasmic reticulum (ER) stress, amino acid starvation, mitochondrial stress or oxidative stress. During ISR, ATF4 translation is induced via an alternative ribosome translation re-initiation mechanism in response to EIF2S1/eIF-2-alpha phosphorylation, and stress-induced ATF4 acts as a master transcription factor of stress-responsive genes in order to promote cell recovery. Promotes the transcription of genes linked to amino acid sufficiency and resistance to oxidative stress to protect cells against metabolic consequences of ER oxidation. Activates the transcription of NLRP1, possibly in concert with other factors in response to ER stress. Activates the transcription of asparagine synthetase (ASNS) in response to amino acid deprivation or ER stress. However, when associated with DDIT3/CHOP, the transcriptional activation of the ASNS gene is inhibited in response to amino acid deprivation. Together with DDIT3/CHOP, mediates programmed cell death by promoting the expression of genes involved in cellular amino acid metabolic processes, mRNA translation and the terminal unfolded protein response (terminal UPR), a cellular response that elicits programmed cell death when ER stress is prolonged and unresolved. Activates the expression of COX7A2L/SCAF1 downstream of the EIF2AK3/PERK-mediated unfolded protein response, thereby promoting formation of respiratory chain supercomplexes and increasing mitochondrial oxidative phosphorylation. Together with DDIT3/CHOP, activates the transcription of the IRS-regulator TRIB3 and promotes ER stress-induced neuronal cell death by regulating the expression of BBC3/PUMA in response to ER stress. May cooperate with the UPR transcriptional regulator QRICH1 to regulate ER protein homeostasis which is critical for cell viability in response to ER stress. In the absence of stress, ATF4 translation is at low levels and it is required for normal metabolic processes such as embryonic lens formation, fetal liver hematopoiesis, bone development and synaptic plasticity. Acts as a regulator of osteoblast differentiation in response to phosphorylation by RPS6KA3/RSK2: phosphorylation in osteoblasts enhances transactivation activity and promotes expression of osteoblast-specific genes and post-transcriptionally regulates the synthesis of Type I collagen, the main constituent of the bone matrix. Cooperates with FOXO1 in osteoblasts to regulate glucose homeostasis through suppression of beta-cell production and decrease in insulin production. Activates transcription of SIRT4. Regulates the circadian expression of the core clock component PER2 and the serotonin transporter SLC6A4. Binds in a circadian time-dependent manner to the cAMP response elements (CRE) in the SLC6A4 and PER2 promoters and periodically activates the transcription of these genes. Mainly acts as a transcriptional activator in cellular stress adaptation, but it can also act as a transcriptional repressor: acts as a regulator of synaptic plasticity by repressing transcription, thereby inhibiting induction and maintenance of long-term memory. Regulates synaptic functions via interaction with DISC1 in neurons, which inhibits ATF4 transcription factor activity by disrupting ATF4 dimerization and DNA-binding. Its function is as follows. (Microbial infection) Binds to a Tax-responsive enhancer element in the long terminal repeat of HTLV-I. This is Cyclic AMP-dependent transcription factor ATF-4 from Homo sapiens (Human).